Reading from the N-terminus, the 340-residue chain is MSFIDEAKVYLKAGKGGDGCSSFRREKFIEFGGPDGGNGGNGGSIIFIASHHVNTLIYFKYKQHIKAENGHPGLSKNKFGLSGRDITIEVPIGTQIYDEEGTLITDLNSENQKFIVAQGGKGGIGNSRYKTSTNRAPRYFTLGEQGEEKWIILKLKIISDVGIIGLPNAGKSSFLASCTNSKTKIANYPFTTLEPELGVAFINNTELVLADIPGLISGAHLGYGIGDKFLKHIERCSILLHIIDCTLEDIIDSYKCIRKELSLYSKALTEKTEFILLNKCDLLDKEEISIKKRLLAEHTKKEIFTSSIKKSKQHILSILIKHINKDCSINKPFIYDPFNT.

The region spanning 1 to 158 (MSFIDEAKVY…KWIILKLKII (158 aa)) is the Obg domain. An OBG-type G domain is found at 159-325 (SDVGIIGLPN…LSILIKHINK (167 aa)). GTP contacts are provided by residues 165-172 (GLPNAGKS), 190-194 (FTTLE), 211-214 (DIPG), 278-281 (NKCD), and 306-308 (SSI). 2 residues coordinate Mg(2+): serine 172 and threonine 192.

This sequence belongs to the TRAFAC class OBG-HflX-like GTPase superfamily. OBG GTPase family. In terms of assembly, monomer. Mg(2+) is required as a cofactor.

It is found in the cytoplasm. Functionally, an essential GTPase which binds GTP, GDP and possibly (p)ppGpp with moderate affinity, with high nucleotide exchange rates and a fairly low GTP hydrolysis rate. Plays a role in control of the cell cycle, stress response, ribosome biogenesis and in those bacteria that undergo differentiation, in morphogenesis control. The polypeptide is GTPase Obg (Ehrlichia ruminantium (strain Gardel)).